Here is an 818-residue protein sequence, read N- to C-terminus: Glycerol-3-phosphate acyltransferase (818 aa).

The HXXXXD motif signature appears at 308–313 (CHRSHM).

The protein belongs to the GPAT/DAPAT family.

Its subcellular location is the cell inner membrane. It catalyses the reaction sn-glycerol 3-phosphate + an acyl-CoA = a 1-acyl-sn-glycero-3-phosphate + CoA. Its pathway is phospholipid metabolism; CDP-diacylglycerol biosynthesis; CDP-diacylglycerol from sn-glycerol 3-phosphate: step 1/3. The protein is Glycerol-3-phosphate acyltransferase of Alteromonas mediterranea (strain DSM 17117 / CIP 110805 / LMG 28347 / Deep ecotype).